The sequence spans 756 residues: Ent-kaurene synthase, chloroplastic (756 aa).

Residues D507 and D511 each coordinate Mg(2+). The DDXXD motif signature appears at 507 to 511 (DDFFD). Residues 606-622 (YVSFALGPIVLPCLYLV) traverse the membrane as a helical segment. Mg(2+) is bound by residues N651, T655, and E659.

This sequence belongs to the terpene synthase family. It depends on Mg(2+) as a cofactor. In terms of tissue distribution, present in both leaves and flowers.

It localises to the plastid. The protein resides in the chloroplast membrane. The enzyme catalyses ent-copalyl diphosphate = ent-kaur-16-ene + diphosphate. It functions in the pathway plant hormone biosynthesis; gibberellin biosynthesis. Involved in the biosynthesis of labdane-type diterpenoid including marrubiin and other labdane-related furanoid diterpenoids with potential applications as anti-diabetics, analgesics or vasorelaxants. Terpene synthase that produces ent-kaurene from ent-copalyl diphosphate (ent-CPP). This Marrubium vulgare (White horehound) protein is Ent-kaurene synthase, chloroplastic.